Consider the following 142-residue polypeptide: Large ribosomal subunit protein bL17 (142 aa).

The protein belongs to the bacterial ribosomal protein bL17 family. In terms of assembly, part of the 50S ribosomal subunit. Contacts protein L32.

The polypeptide is Large ribosomal subunit protein bL17 (Methylocella silvestris (strain DSM 15510 / CIP 108128 / LMG 27833 / NCIMB 13906 / BL2)).